Here is an 822-residue protein sequence, read N- to C-terminus: Nose resistant to fluoxetine protein 6 (822 aa).

Residues 1 to 24 (MGNMRRLLIFAVLVILTVISNSKS) form the signal peptide. Residue Asn236 is glycosylated (N-linked (GlcNAc...) asparagine). A run of 3 helical transmembrane segments spans residues 306–326 (LAMF…FGTL), 617–637 (PYIR…LNAW), and 655–675 (IICW…LYWF).

It belongs to the acyltransferase 3 family. In L1 larvae through to adult, hyp3 and hyp5, the most anterior cells in the hypodermis, and in intestine. Other hypodermal cells show weaker expression.

It is found in the membrane. Its function is as follows. Plays a role in the uptake of a range of molecules including lipids and xenobiotic compounds from the intestine to surrounding tissues. Mediates transport of lipids from intestine to the reproductive tract. Required for efficient yolk transport into oocytes. Vital for embryonic development. The polypeptide is Nose resistant to fluoxetine protein 6 (nrf-6) (Caenorhabditis elegans).